Here is a 119-residue protein sequence, read N- to C-terminus: Fluoride-specific ion channel FluC (119 aa).

4 helical membrane passes run 5–25, 30–50, 59–79, and 92–112; these read IIPLSIGAALGATARWLLNLA, LSPATGNLFANWTGAFLIGIF, WKLLLITGFLGSLTTLSGFSL, and SALANIFLHTAGSLLLTWLGL. Residues G69 and T72 each coordinate Na(+).

The protein belongs to the fluoride channel Fluc/FEX (TC 1.A.43) family.

The protein localises to the cell inner membrane. The catalysed reaction is fluoride(in) = fluoride(out). Na(+) is not transported, but it plays an essential structural role and its presence is essential for fluoride channel function. In terms of biological role, fluoride-specific ion channel. Important for reducing fluoride concentration in the cell, thus reducing its toxicity. In Neisseria meningitidis serogroup A / serotype 4A (strain DSM 15465 / Z2491), this protein is Fluoride-specific ion channel FluC.